The primary structure comprises 215 residues: High mobility group protein B1 (215 aa).

Residue 2–10 (GKGDPKKPR) participates in heparin binding. The segment at 2 to 97 (GKGDPKKPRG…KFKDPNAPKR (96 aa)) is sufficient for interaction with HAVCR2. N6-acetyllysine occurs at positions 3, 7, 8, and 12. The segment at 3 to 15 (KGDPKKPRGKMSS) is LPS binding (delipidated). A DNA-binding region (HMG box 1) is located at residues 9–79 (PRGKMSSYAF…RYEREMKTYI (71 aa)). C23 carries the cysteine sulfonic acid (-SO3H); alternate modification. A disulfide bridge connects residues C23 and C45. The Nuclear localization signal (NLS) 1 signature appears at 27–43 (HKKKHPDASVNFSEFSK). Residues K28, K29, and K30 each carry the N6-acetyllysine modification. Residue K28 forms an Isoglutamyl lysine isopeptide (Lys-Gln) (interchain with Q-?) linkage. S35 is subject to Phosphoserine. N6-acetyllysine is present on K43. Isoglutamyl lysine isopeptide (Lys-Gln) (interchain with Q-?) cross-links involve residues K43 and K44. Residue C45 is modified to Cysteine sulfonic acid (-SO3H); alternate. Residue K68 forms an Isoglutamyl lysine isopeptide (Lys-Gln) (interchain with Q-?) linkage. Residues 76 to 95 (KTYIPPKGETKKKFKDPNAP) are disordered. The segment at 80 to 96 (PPKGETKKKFKDPNAPK) is LPS binding (Lipid A). Residues 83–94 (GETKKKFKDPNA) show a composition bias toward basic and acidic residues. Residues 89–108 (FKDPNAPKRPPSAFFLFCSE) form a cytokine-stimulating activity region. Residue K90 is modified to N6-acetyllysine. The HMG box 2 DNA-binding region spans 95–163 (PKRPPSAFFL…KYEKDIAAYR (69 aa)). S100 bears the Phosphoserine mark. Residue C106 is modified to Cysteine sulfonic acid (-SO3H). N6-acetyllysine occurs at positions 127, 128, 141, 172, 173, 177, and 180. The tract at residues 150 to 183 (KLKEKYEKDIAAYRAKGKPDAAKKGVVKAEKSKK) is binding to AGER/RAGE. Over residues 161–179 (AYRAKGKPDAAKKGVVKAE) the composition is skewed to basic and acidic residues. Residues 161–215 (AYRAKGKPDAAKKGVVKAEKSKKKKEEEEDEEDEEDEEEEEDEEDEEEEEDDDDE) are disordered. The Nuclear localization signal (NLS) 2 motif lies at 178 to 184 (AEKSKKK). An Isoglutamyl lysine isopeptide (Lys-Gln) (interchain with Q-?) cross-link involves residue K180. S181 carries the ADP-ribosylserine modification. 4 positions are modified to N6-acetyllysine: K182, K183, K184, and K185. Isoglutamyl lysine isopeptide (Lys-Gln) (interchain with Q-?) cross-links involve residues K182, K183, and K184. Residues 187-215 (EEEDEEDEEDEEEEEDEEDEEEEEDDDDE) are compositionally biased toward acidic residues.

It belongs to the HMGB family. As to quaternary structure, interacts (fully reduced HMGB1) with CXCL12; probably in a 1:2 ratio involving two molecules of CXCL12, each interacting with one HMG box of HMGB1; inhibited by glycyrrhizin. Associates with the TLR4:LY96 receptor complex. Component of the RAG complex composed of core components RAG1 and RAG2, and associated component HMGB1 or HMGB2. Interacts (in cytoplasm upon starvation) with BECN1; inhibits the interaction of BECN1 and BCL2 leading to promotion of autophagy. Interacts with KPNA1; involved in nuclear import. Interacts with AGER. Interacts with SREBF1, TLR2, TLR4, TLR9, PTPRZ1, APEX1, FEN1, POLB, TERT. Interacts with IL1B, MSH2, XPA, XPC, HNF1A, TP53. Interacts with CD24; the probable CD24:SIGLEC10 complex is proposed to inhibit HGMB1-mediated tissue damage immune response. Interacts with THBD; prevents HGMB1 interaction with ACER/RAGE and inhibits HGMB1 pro-inflammatory activity. Interacts with HAVCR2; impairs HMGB1 binding to B-DNA and likely HMGB1-mediated innate immune response. Interacts with XPO1; mediating nuclear export. Interacts with receptor RAGE/AGER. Post-translationally, phosphorylated at serine residues. Phosphorylation in both NLS regions is required for cytoplasmic translocation followed by secretion. In terms of processing, acetylated on multiple sites upon stimulation with LPS. Acetylation on lysine residues in the nuclear localization signals (NLS 1 and NLS 2) leads to cytoplasmic localization and subsequent secretion. Acetylation on Lys-3 results in preferential binding to DNA ends and impairs DNA bending activity. Reduction/oxidation of cysteine residues Cys-23, Cys-45 and Cys-106 and a possible intramolecular disulfide bond involving Cys-23 and Cys-45 give rise to different redox forms with specific functional activities in various cellular compartments: 1- fully reduced HMGB1 (HMGB1C23hC45hC106h), 2- disulfide HMGB1 (HMGB1C23-C45C106h) and 3- sulfonyl HMGB1 (HMGB1C23soC45soC106so). Post-translationally, poly-ADP-ribosylated by PARP1 when secreted following stimulation with LPS. In terms of processing, in vitro cleavage by CASP1 is liberating a HMG box 1-containing peptide which may mediate immunogenic activity; the peptide antagonizes apoptosis-induced immune tolerance. Can be proteolytically cleaved by a thrombin:thrombomodulin complex; reduces binding to heparin and pro-inflammatory activities. Forms covalent cross-links mediated by transglutaminase TGM2, between a glutamine and the epsilon-amino group of a lysine residue, forming homopolymers and heteropolymers.

The protein localises to the nucleus. Its subcellular location is the chromosome. The protein resides in the cytoplasm. It is found in the secreted. It localises to the cell membrane. The protein localises to the endosome. Its subcellular location is the endoplasmic reticulum-Golgi intermediate compartment. Functionally, multifunctional redox sensitive protein with various roles in different cellular compartments. In the nucleus is one of the major chromatin-associated non-histone proteins and acts as a DNA chaperone involved in replication, transcription, chromatin remodeling, V(D)J recombination, DNA repair and genome stability. Proposed to be an universal biosensor for nucleic acids. Promotes host inflammatory response to sterile and infectious signals and is involved in the coordination and integration of innate and adaptive immune responses. In the cytoplasm functions as a sensor and/or chaperone for immunogenic nucleic acids implicating the activation of TLR9-mediated immune responses, and mediates autophagy. Acts as a danger-associated molecular pattern (DAMP) molecule that amplifies immune responses during tissue injury. Released to the extracellular environment can bind DNA, nucleosomes, IL-1 beta, CXCL12, AGER isoform 2/sRAGE, lipopolysaccharide (LPS) and lipoteichoic acid (LTA), and activates cells through engagement of multiple surface receptors. In the extracellular compartment fully reduced HMGB1 (released by necrosis) acts as a chemokine, disulfide HMGB1 (actively secreted) as a cytokine, and sulfonyl HMGB1 (released from apoptotic cells) promotes immunological tolerance. Has proangiogenic activity. May be involved in platelet activation. Binds to phosphatidylserine and phosphatidylethanolamide. Bound to RAGE mediates signaling for neuronal outgrowth. May play a role in accumulation of expanded polyglutamine (polyQ) proteins. Its function is as follows. Nuclear functions are attributed to fully reduced HGMB1. Associates with chromatin and binds DNA with a preference to non-canonical DNA structures such as single-stranded DNA, DNA-containing cruciforms or bent structures, supercoiled DNA and ZDNA. Can bent DNA and enhance DNA flexibility by looping thus providing a mechanism to promote activities on various gene promoters by enhancing transcription factor binding and/or bringing distant regulatory sequences into close proximity. May be involved in nucleotide excision repair (NER), mismatch repair (MMR) and base excision repair (BER) pathways, and double strand break repair such as non-homologous end joining (NHEJ). Involved in V(D)J recombination by acting as a cofactor of the RAG complex: acts by stimulating cleavage and RAG protein binding at the 23 bp spacer of conserved recombination signal sequences (RSS). In vitro can displace histone H1 from highly bent DNA. Can restructure the canonical nucleosome leading to relaxation of structural constraints for transcription factor-binding. Enhances binding of sterol regulatory element-binding proteins (SREBPs) such as SREBF1 to their cognate DNA sequences and increases their transcriptional activities. Facilitates binding of TP53 to DNA. May be involved in mitochondrial quality control and autophagy in a transcription-dependent fashion implicating HSPB1. Can modulate the activity of the telomerase complex and may be involved in telomere maintenance. In terms of biological role, in the cytoplasm proposed to dissociate the BECN1:BCL2 complex via competitive interaction with BECN1 leading to autophagy activation. Involved in oxidative stress-mediated autophagy. Can protect BECN1 and ATG5 from calpain-mediated cleavage and thus proposed to control their proautophagic and proapoptotic functions and to regulate the extent and severity of inflammation-associated cellular injury. In myeloid cells has a protective role against endotoxemia and bacterial infection by promoting autophagy. Involved in endosomal translocation and activation of TLR9 in response to CpG-DNA in macrophages. In the extracellular compartment (following either active secretion or passive release)involved in regulation of the inflammatory response. Fully reduced HGMB1 (which subsequently gets oxidized after release) in association with CXCL12 mediates the recruitment of inflammatory cells during the initial phase of tissue injury; the CXCL12:HMGB1 complex triggers CXCR4 homodimerization. Induces the migration of monocyte-derived immature dendritic cells and seems to regulate adhesive and migratory functions of neutrophils implicating AGER/RAGE and ITGAM. Can bind to various types of DNA and RNA including microbial unmethylated CpG-DNA to enhance the innate immune response to nucleic acids. Proposed to act in promiscuous DNA/RNA sensing which cooperates with subsequent discriminative sensing by specific pattern recognition receptors. Promotes extracellular DNA-induced AIM2 inflammasome activation implicating AGER/RAGE. Disulfide HMGB1 binds to transmembrane receptors, such as AGER/RAGE, TLR2, TLR4 and probably TREM1, thus activating their signal transduction pathways. Mediates the release of cytokines/chemokines such as TNF, IL-1, IL-6, IL-8, CCL2, CCL3, CCL4 and CXCL10. Promotes secretion of interferon-gamma by macrophage-stimulated natural killer (NK) cells in concert with other cytokines like IL-2 or IL-12. TLR4 is proposed to be the primary receptor promoting macrophage activation and signaling through TLR4 seems to implicate LY96/MD-2. In bacterial LPS- or LTA-mediated inflammatory responses binds to the endotoxins and transfers them to CD14 for signaling to the respective TLR4:LY96 and TLR2 complexes. Contributes to tumor proliferation by association with ACER/RAGE. Can bind to IL1-beta and signals through the IL1R1:IL1RAP receptor complex. Binding to class A CpG activates cytokine production in plasmacytoid dendritic cells implicating TLR9, MYD88 and AGER/RAGE and can activate autoreactive B cells. Via HMGB1-containing chromatin immune complexes may also promote B cell responses to endogenous TLR9 ligands through a B-cell receptor (BCR)-dependent and ACER/RAGE-independent mechanism. Inhibits phagocytosis of apoptotic cells by macrophages; the function is dependent on poly-ADP-ribosylation and involves binding to phosphatidylserine on the cell surface of apoptotic cells. In adaptive immunity may be involved in enhancing immunity through activation of effector T-cells and suppression of regulatory T (TReg) cells. In contrast, without implicating effector or regulatory T-cells, required for tumor infiltration and activation of T-cells expressing the lymphotoxin LTA:LTB heterotrimer thus promoting tumor malignant progression. Also reported to limit proliferation of T-cells. Released HMGB1:nucleosome complexes formed during apoptosis can signal through TLR2 to induce cytokine production. Involved in induction of immunological tolerance by apoptotic cells; its pro-inflammatory activities when released by apoptotic cells are neutralized by reactive oxygen species (ROS)-dependent oxidation specifically on Cys-106. During macrophage activation by activated lymphocyte-derived self apoptotic DNA (ALD-DNA) promotes recruitment of ALD-DNA to endosomes. The protein is High mobility group protein B1 (HMGB1) of Bos taurus (Bovine).